The chain runs to 541 residues: Nuclear receptor subfamily 5 group A member 2 (541 aa).

Residues 1 to 10 (MSSNSDTGDL) show a composition bias toward polar residues. Positions 1 to 35 (MSSNSDTGDLQESLKHGLTPIGAGLPDRHGSPIPA) are disordered. A DNA-binding region (nuclear receptor) is located at residues 83 to 154 (EELCPVCGDK…KCLSVGMKLE (72 aa)). 8 residues coordinate Zn(2+): Cys86, Cys89, Cys103, Cys106, Cys122, Cys128, Cys138, and Cys141. 2 NR C4-type zinc fingers span residues 86-106 (CPVC…CESC) and 122-146 (CIEN…FQKC). Residues 152-167 (KLEAVRADRMRGGRNK) form a C-terminal extension (CTE) region. The FTZ-F1 box signature appears at 168–187 (FGPMYKRDRALKQQKKALIR). Residue Lys270 forms a Glycyl lysine isopeptide (Lys-Gly) (interchain with G-Cter in SUMO1) linkage. Positions 300–539 (SIPHLILELL…NLLIEMLHAK (240 aa)) constitute an NR LBD domain. A phospholipid derivative contacts are provided by residues 421–424 (GATL), Tyr516, and Lys520. The AF-2 stretch occupies residues 528 to 539 (YNNLLIEMLHAK).

Belongs to the nuclear hormone receptor family. NR5 subfamily. Monomer; Binds DNA as a monomer. Interacts with nuclear receptor corepressors NR0B1 and NR0B2; repressing NR5A2 nuclear receptor activity. Interacts with nuclear receptor coactivators CTNNB1, PPARGC1A and NCOA2; interaction takes place following ligand-binding and promotes target gene activation. Interacts (when sumoylated) with GPS2; interaction with GPS2 onto hepatic acute phase protein promoters prevents N-Cor corepressor complex dissociation. Interacts with HNF1A. Interacts with GRIP1. Post-translationally, sumoylated by SUMO1 at Lys-270 during the hepatic acute phase response, leading to promote interaction with GPS2 and prevent N-Cor corepressor complex dissociation. As to expression, abundantly expressed in pancreas, less in liver, very low levels in heart and lung. Expressed in the Hep-G2 cell line. Isoform 1 and isoform 2 seem to be present in fetal and adult liver and Hep-G2 cells.

Its subcellular location is the nucleus. It localises to the chromosome. With respect to regulation, activated by synthetic agonists RR-RJW100, SR-RJW100, endo sulfamide compound 6N and GSK8470. Its function is as follows. Orphan nuclear receptor that binds DNA as a monomer to the 5'-TCAAGGCCA-3' sequence and controls expression of target genes: regulates key biological processes, such as early embryonic development, cholesterol and bile acid synthesis pathways, as well as liver and pancreas morphogenesis. Ligand-binding causes conformational change which causes recruitment of coactivators, promoting target gene activation. The specific ligand is unknown, but specific phospholipids, such as phosphatidylethanolamine, phosphatidylserine, dilauroyl phosphatidylcholine and diundecanoyl phosphatidylcholine can act as ligand in vitro. Acts as a pioneer transcription factor, which unwraps target DNA from histones and elicits local opening of closed chromatin. Plays a central role during preimplantation stages of embryonic development. Plays a minor role in zygotic genome activation (ZGA) by regulating a small set of two-cell stage genes. Plays a major role in morula development (2-16 cells embryos) by acting as a master regulator at the 8-cell stage, controlling expression of lineage-specifying transcription factors and genes involved in mitosis, telomere maintenance and DNA repair. Zygotic NR5A2 binds to both closed and open chromatin with other transcription factors, often at SINE B1/Alu repeats DNA elements, promoting chromatin accessibility at nearby regulatory regions. Also involved in the epiblast stage of development and embryonic stem cell pluripotency, by promoting expression of POU5F1/OCT4. Regulates other processes later in development, such as formation of connective tissue in lower jaw and middle ear, neural stem cell differentiation, ovarian follicle development and Sertoli cell differentiation. Involved in exocrine pancreas development and acinar cell differentiation. Acts as an essential transcriptional regulator of lipid metabolism. Key regulator of cholesterol 7-alpha-hydroxylase gene (CYP7A) expression in liver. Also acts as a negative regulator of inflammation in different organs, such as, liver and pancreas. Protects against intestinal inflammation via its ability to regulate glucocorticoid production. Plays an anti-inflammatory role during the hepatic acute phase response by acting as a corepressor: inhibits the hepatic acute phase response by preventing dissociation of the N-Cor corepressor complex. Acts as a regulator of immunity by promoting lymphocyte T-cell development, proliferation and effector functions. Also involved in resolution of endoplasmic reticulum stress in the liver. In constrast to isoform 1 and isoform 2, does not induce cholesterol 7-alpha-hydroxylase gene (CYP7A) promoter activity. Functionally, (Microbial infection) Plays a crucial role for hepatitis B virus gene transcription and DNA replication. Mechanistically, synergistically cooperates with HNF1A to up-regulate the activity of one of the critical cis-elements in the hepatitis B virus genome enhancer II (ENII). The protein is Nuclear receptor subfamily 5 group A member 2 of Homo sapiens (Human).